Reading from the N-terminus, the 626-residue chain is Endogenous retrovirus group S71 member 1 Env polyprotein (626 aa).

The signal sequence occupies residues 1-38 (MGPEAWVRPLKTAPKPGEAIRLILFIYLSCFFLPVMSS). Residues 39 to 438 (EPSYSFLLTS…PPELHPRLHQ (400 aa)) are surface protein. Over 39 to 575 (EPSYSFLLTS…FNWNPWLTTL (537 aa)) the chain is Extracellular. The short motif at 302-305 (CWLC) is the CXXC element. Residues 439 to 459 (AVPLLVPLLAGLSIAGSAAIG) form a fusion peptide region. The transmembrane protein stretch occupies residues 439 to 626 (AVPLLVPLLA…KTQYDTLVNN (188 aa)). Positions 503-519 (LQNCRCLDLLFLSQGGL) match the CKS-17 motif. C520 and C527 are oxidised to a cystine. Positions 520 to 528 (CAALGESCC) match the CX6CC motif. Residues 576 to 596 (ITGLAGPLLILLLSLIFGPCI) form a helical membrane-spanning segment. At 597–626 (LNSFLNFIKQRIASVKLTYLKTQYDTLVNN) the chain is on the cytoplasmic side.

It belongs to the gamma type-C retroviral envelope protein family. HERV class-I T env subfamily. The CXXC motif is highly conserved across a broad range of retroviral envelope proteins. It is thought to participate in the formation of a labile disulfide bond possibly with the CX6CC motif present in the transmembrane domain. In terms of tissue distribution, expressed at higher level in thyroid. Expressed at lower level in adrenal, bone marrow, brain, breast, kidney, ovary, placenta, prostate, skin, testis and trachea.

Its subcellular location is the cell membrane. Functionally, retroviral envelope proteins mediate receptor recognition and membrane fusion during early infection. Endogenous envelope proteins may have kept, lost or modified their original function during evolution. This endogenous envelope protein has lost its original fusogenic properties. The polypeptide is Endogenous retrovirus group S71 member 1 Env polyprotein (ERVS71-1) (Homo sapiens (Human)).